The chain runs to 295 residues: Undecaprenyl-diphosphatase (295 aa).

The next 6 membrane-spanning stretches (helical) occupy residues P39–F59, W97–I117, L121–V141, A198–I218, A232–L252, and F263–L283.

Belongs to the UppP family.

The protein resides in the cell membrane. It carries out the reaction di-trans,octa-cis-undecaprenyl diphosphate + H2O = di-trans,octa-cis-undecaprenyl phosphate + phosphate + H(+). Functionally, catalyzes the dephosphorylation of undecaprenyl diphosphate (UPP). Confers resistance to bacitracin. This Bifidobacterium animalis subsp. lactis (strain AD011) protein is Undecaprenyl-diphosphatase.